The chain runs to 188 residues: Segregation and condensation protein B (188 aa).

The protein belongs to the ScpB family. In terms of assembly, homodimer. Homodimerization may be required to stabilize the binding of ScpA to the Smc head domains. Component of a cohesin-like complex composed of ScpA, ScpB and the Smc homodimer, in which ScpA and ScpB bind to the head domain of Smc. The presence of the three proteins is required for the association of the complex with DNA.

The protein localises to the cytoplasm. Its function is as follows. Participates in chromosomal partition during cell division. May act via the formation of a condensin-like complex containing Smc and ScpA that pull DNA away from mid-cell into both cell halves. In Streptococcus gordonii (strain Challis / ATCC 35105 / BCRC 15272 / CH1 / DL1 / V288), this protein is Segregation and condensation protein B.